We begin with the raw amino-acid sequence, 450 residues long: Tubulin alpha-3 chain (450 aa).

Glutamine 11, glutamate 71, glycine 144, threonine 145, threonine 179, asparagine 206, and asparagine 228 together coordinate GTP. Residue glutamate 71 participates in Mg(2+) binding. Glutamate 254 is a catalytic residue.

Belongs to the tubulin family. In terms of assembly, dimer of alpha and beta chains. A typical microtubule is a hollow water-filled tube with an outer diameter of 25 nm and an inner diameter of 15 nM. Alpha-beta heterodimers associate head-to-tail to form protofilaments running lengthwise along the microtubule wall with the beta-tubulin subunit facing the microtubule plus end conferring a structural polarity. Microtubules usually have 13 protofilaments but different protofilament numbers can be found in some organisms and specialized cells. Requires Mg(2+) as cofactor. Post-translationally, undergoes a tyrosination/detyrosination cycle, the cyclic removal and re-addition of a C-terminal tyrosine residue by the enzymes tubulin tyrosine carboxypeptidase (TTCP) and tubulin tyrosine ligase (TTL), respectively.

It localises to the cytoplasm. The protein localises to the cytoskeleton. It catalyses the reaction GTP + H2O = GDP + phosphate + H(+). Tubulin is the major constituent of microtubules, a cylinder consisting of laterally associated linear protofilaments composed of alpha- and beta-tubulin heterodimers. Microtubules grow by the addition of GTP-tubulin dimers to the microtubule end, where a stabilizing cap forms. Below the cap, tubulin dimers are in GDP-bound state, owing to GTPase activity of alpha-tubulin. The polypeptide is Tubulin alpha-3 chain (TUBA3) (Eleusine indica (Goosegrass)).